Here is a 290-residue protein sequence, read N- to C-terminus: Elongation factor Ts (290 aa).

The tract at residues 82–85 is involved in Mg(2+) ion dislocation from EF-Tu; the sequence is TDFV.

This sequence belongs to the EF-Ts family.

Its subcellular location is the cytoplasm. Associates with the EF-Tu.GDP complex and induces the exchange of GDP to GTP. It remains bound to the aminoacyl-tRNA.EF-Tu.GTP complex up to the GTP hydrolysis stage on the ribosome. In Cellvibrio japonicus (strain Ueda107) (Pseudomonas fluorescens subsp. cellulosa), this protein is Elongation factor Ts.